The following is a 168-amino-acid chain: Crossover junction endodeoxyribonuclease RuvC (168 aa).

Catalysis depends on residues aspartate 8, glutamate 68, and aspartate 140. Residues aspartate 8, glutamate 68, and aspartate 140 each coordinate Mg(2+).

It belongs to the RuvC family. In terms of assembly, homodimer which binds Holliday junction (HJ) DNA. The HJ becomes 2-fold symmetrical on binding to RuvC with unstacked arms; it has a different conformation from HJ DNA in complex with RuvA. In the full resolvosome a probable DNA-RuvA(4)-RuvB(12)-RuvC(2) complex forms which resolves the HJ. Requires Mg(2+) as cofactor.

The protein resides in the cytoplasm. It catalyses the reaction Endonucleolytic cleavage at a junction such as a reciprocal single-stranded crossover between two homologous DNA duplexes (Holliday junction).. The RuvA-RuvB-RuvC complex processes Holliday junction (HJ) DNA during genetic recombination and DNA repair. Endonuclease that resolves HJ intermediates. Cleaves cruciform DNA by making single-stranded nicks across the HJ at symmetrical positions within the homologous arms, yielding a 5'-phosphate and a 3'-hydroxyl group; requires a central core of homology in the junction. The consensus cleavage sequence is 5'-(A/T)TT(C/G)-3'. Cleavage occurs on the 3'-side of the TT dinucleotide at the point of strand exchange. HJ branch migration catalyzed by RuvA-RuvB allows RuvC to scan DNA until it finds its consensus sequence, where it cleaves and resolves the cruciform DNA. This chain is Crossover junction endodeoxyribonuclease RuvC, found in Lawsonia intracellularis (strain PHE/MN1-00).